The primary structure comprises 156 residues: SsrA-binding protein (156 aa).

It belongs to the SmpB family.

The protein resides in the cytoplasm. In terms of biological role, required for rescue of stalled ribosomes mediated by trans-translation. Binds to transfer-messenger RNA (tmRNA), required for stable association of tmRNA with ribosomes. tmRNA and SmpB together mimic tRNA shape, replacing the anticodon stem-loop with SmpB. tmRNA is encoded by the ssrA gene; the 2 termini fold to resemble tRNA(Ala) and it encodes a 'tag peptide', a short internal open reading frame. During trans-translation Ala-aminoacylated tmRNA acts like a tRNA, entering the A-site of stalled ribosomes, displacing the stalled mRNA. The ribosome then switches to translate the ORF on the tmRNA; the nascent peptide is terminated with the 'tag peptide' encoded by the tmRNA and targeted for degradation. The ribosome is freed to recommence translation, which seems to be the essential function of trans-translation. The sequence is that of SsrA-binding protein from Shouchella clausii (strain KSM-K16) (Alkalihalobacillus clausii).